Reading from the N-terminus, the 317-residue chain is NAD kinase (317 aa).

Catalysis depends on Asp-82, which acts as the Proton acceptor. NAD(+) is bound by residues 82–83 (DG), Arg-87, 157–158 (NE), Asp-187, and 198–203 (TAYAFS).

This sequence belongs to the NAD kinase family. The cofactor is a divalent metal cation.

It is found in the cytoplasm. It catalyses the reaction NAD(+) + ATP = ADP + NADP(+) + H(+). Involved in the regulation of the intracellular balance of NAD and NADP, and is a key enzyme in the biosynthesis of NADP. Catalyzes specifically the phosphorylation on 2'-hydroxyl of the adenosine moiety of NAD to yield NADP. The sequence is that of NAD kinase from Corynebacterium diphtheriae (strain ATCC 700971 / NCTC 13129 / Biotype gravis).